The sequence spans 277 residues: 4-hydroxy-tetrahydrodipicolinate reductase (277 aa).

NAD(+) contacts are provided by residues 11–16 (GALGRM) and 110–112 (GTT). The active-site Proton donor/acceptor is the His166. A (S)-2,3,4,5-tetrahydrodipicolinate-binding site is contributed by His167. Catalysis depends on Lys170, which acts as the Proton donor. 176 to 177 (GT) serves as a coordination point for (S)-2,3,4,5-tetrahydrodipicolinate.

It belongs to the DapB family.

It is found in the cytoplasm. It catalyses the reaction (S)-2,3,4,5-tetrahydrodipicolinate + NAD(+) + H2O = (2S,4S)-4-hydroxy-2,3,4,5-tetrahydrodipicolinate + NADH + H(+). The enzyme catalyses (S)-2,3,4,5-tetrahydrodipicolinate + NADP(+) + H2O = (2S,4S)-4-hydroxy-2,3,4,5-tetrahydrodipicolinate + NADPH + H(+). The protein operates within amino-acid biosynthesis; L-lysine biosynthesis via DAP pathway; (S)-tetrahydrodipicolinate from L-aspartate: step 4/4. Functionally, catalyzes the conversion of 4-hydroxy-tetrahydrodipicolinate (HTPA) to tetrahydrodipicolinate. The chain is 4-hydroxy-tetrahydrodipicolinate reductase from Parasynechococcus marenigrum (strain WH8102).